Consider the following 329-residue polypeptide: E3 ubiquitin-protein ligase SINA-like 4 (329 aa).

Residues 1-12 (MTKLGRRNDGGG) are compositionally biased toward basic and acidic residues. The tract at residues 1 to 58 (MTKLGRRNDGGGKSHRSSTKRQRRTSVSVDDPSPGEEEEKTLVVLTDDSDSEEDDKPL) is disordered. Basic residues predominate over residues 13–24 (KSHRSSTKRQRR). The RING-type; degenerate zinc-finger motif lies at 86–122 (CPNCFDPLKKPIFQCNNGHLACFLCCIKLKKRCSFCK). The tract at residues 136 to 325 (VIKAGLVSCS…MEISIGDKND (190 aa)) is SBD. The segment at 139–198 (AGLVSCSNAIYGCKQSTTYGNQLQSHEKVCVFAPCSCPIKDCNYIGFYKDLINHFRATHK) adopts an SIAH-type zinc-finger fold. Zn(2+) is bound by residues C144, C151, H164, C168, C175, C180, H192, and H197.

The protein belongs to the SINA (Seven in absentia) family.

The enzyme catalyses S-ubiquitinyl-[E2 ubiquitin-conjugating enzyme]-L-cysteine + [acceptor protein]-L-lysine = [E2 ubiquitin-conjugating enzyme]-L-cysteine + N(6)-ubiquitinyl-[acceptor protein]-L-lysine.. It functions in the pathway protein modification; protein ubiquitination. In terms of biological role, E3 ubiquitin-protein ligase that mediates ubiquitination and subsequent proteasomal degradation of target proteins. E3 ubiquitin ligases accept ubiquitin from an E2 ubiquitin-conjugating enzyme in the form of a thioester and then directly transfers the ubiquitin to targeted substrates. It probably triggers the ubiquitin-mediated degradation of different substrates. This is E3 ubiquitin-protein ligase SINA-like 4 from Arabidopsis thaliana (Mouse-ear cress).